Reading from the N-terminus, the 274-residue chain is Peroxiredoxin-4 (274 aa).

A signal peptide spans 1–40; sequence MEARSKLLDGTTASRRWTRKLVLLLPPLLLFLLRTESLQG. The Thioredoxin domain occupies 82-240; the sequence is AKISKPAPYW…TLRLVQAFQY (159 aa). The active-site Cysteine sulfenic acid (-SOH) intermediate is cysteine 127.

This sequence belongs to the peroxiredoxin family. AhpC/Prx1 subfamily. In terms of assembly, homodimer; disulfide-linked, upon oxidation. 5 homodimers assemble to form a ring-like decamer. The enzyme can be inactivated by further oxidation of the cysteine sulfenic acid (C(P)-SOH) to sulphinic acid (C(P)-SO2H) and sulphonic acid (C(P)-SO3H) instead of its condensation to a disulfide bond.

It localises to the cytoplasm. The protein localises to the endoplasmic reticulum. The catalysed reaction is a hydroperoxide + [thioredoxin]-dithiol = an alcohol + [thioredoxin]-disulfide + H2O. Its function is as follows. Thiol-specific peroxidase that catalyzes the reduction of hydrogen peroxide and organic hydroperoxides to water and alcohols, respectively. Plays a role in cell protection against oxidative stress by detoxifying peroxides and as sensor of hydrogen peroxide-mediated signaling events. Regulates the activation of NF-kappa-B in the cytosol by a modulation of I-kappa-B-alpha phosphorylation. The polypeptide is Peroxiredoxin-4 (Prdx4) (Mus musculus (Mouse)).